Consider the following 1842-residue polypeptide: Vacuolar membrane-associated protein iml1 (1842 aa).

The span at 1–12 shows a compositional bias: basic residues; the sequence is MALRGPMKRSHL. Disordered stretches follow at residues 1 to 49, 728 to 817, and 887 to 976; these read MALR…ATPD, RRQQ…ARTP, and SLRP…SPQN. Residues 16 to 31 show a composition bias toward polar residues; sequence SAPSVDSLSVPQSQSP. The span at 36-49 shows a compositional bias: basic and acidic residues; that stretch reads NDEHSHQDVHATPD. The segment covering 728 to 738 has biased composition (basic residues); sequence RRQQRKASRPK. Residues 750–767 show a composition bias toward basic and acidic residues; it reads AHERLSARSVLRLREHET. Positions 797–814 are enriched in low complexity; it reads PSKTSSPKKPALKAPSAA. Over residues 963–976 the composition is skewed to polar residues; the sequence is SGGSRESSIKSPQN. A DEP domain is found at 1338 to 1413; sequence GEKGVRMMDR…DGNYFYQISS (76 aa). Disordered stretches follow at residues 1422–1475 and 1822–1842; these read SRGS…KSKN and NDSL…LNMT.

It belongs to the IML1 family.

The protein localises to the vacuole membrane. The sequence is that of Vacuolar membrane-associated protein iml1 (iml1) from Neosartorya fischeri (strain ATCC 1020 / DSM 3700 / CBS 544.65 / FGSC A1164 / JCM 1740 / NRRL 181 / WB 181) (Aspergillus fischerianus).